The sequence spans 362 residues: Adenosine deaminase (362 aa).

2 residues coordinate Zn(2+): His19 and His21. Residues His21, Asp23, and Gly181 each coordinate substrate. His208 contributes to the Zn(2+) binding site. The active-site Proton donor is the Glu211. Asp300 contacts Zn(2+).

The protein belongs to the metallo-dependent hydrolases superfamily. Adenosine and AMP deaminases family. Adenosine deaminase subfamily. Zn(2+) is required as a cofactor.

The catalysed reaction is adenosine + H2O + H(+) = inosine + NH4(+). It carries out the reaction 2'-deoxyadenosine + H2O + H(+) = 2'-deoxyinosine + NH4(+). In terms of biological role, catalyzes the hydrolytic deamination of adenosine and 2-deoxyadenosine. The chain is Adenosine deaminase from Mycobacterium leprae (strain TN).